Here is a 222-residue protein sequence, read N- to C-terminus: Sororin-like protein (222 aa).

A disordered region spans residues 1 to 189 (MEAPRSVGGR…VKQEKEDPVS (189 aa)). Over residues 24–33 (SRSSQQSSSS) the composition is skewed to low complexity. Residues 47–60 (RLVEQTTLKEKPKD) are compositionally biased toward basic and acidic residues. The segment covering 88–105 (ADLASPASAPSRPQTSRS) has biased composition (low complexity). A Nuclear localization signal motif is present at residues 155 to 162 (GKKTRQAS). Basic residues predominate over residues 167-179 (KTLKVAPKKRQRT). The tract at residues 192-214 (CQDYIEKQKAYFAEIDAFELPVE) is C-terminal Sororin domain.

Belongs to the sororin family.

The protein resides in the nucleus. Regulator of sister chromatid cohesion in mitosis stabilizing cohesin complex association with chromatin. Antagonizes the action of WAPL proteins (WAPL1 and WAPL2) which stimulates cohesin dissociation from chromatin, particularly during somatic division in root cells and meiocytes during anaphase I. Required for centromeric sister chromatid cohesion during male meiosis (microsporogenesis). Cohesion ensures that chromosome partitioning is accurate in dividing cells and may play an important role in DNA repair. This Arabidopsis thaliana (Mouse-ear cress) protein is Sororin-like protein.